Consider the following 230-residue polypeptide: 2,3-bisphosphoglycerate-dependent phosphoglycerate mutase (230 aa).

Substrate contacts are provided by residues 8-15 (RHGESEWN), 21-22 (TG), R60, 87-90 (ERHY), K98, 114-115 (RR), and 183-184 (GN). Catalysis depends on H9, which acts as the Tele-phosphohistidine intermediate. Catalysis depends on E87, which acts as the Proton donor/acceptor.

It belongs to the phosphoglycerate mutase family. BPG-dependent PGAM subfamily.

The enzyme catalyses (2R)-2-phosphoglycerate = (2R)-3-phosphoglycerate. The protein operates within carbohydrate degradation; glycolysis; pyruvate from D-glyceraldehyde 3-phosphate: step 3/5. In terms of biological role, catalyzes the interconversion of 2-phosphoglycerate and 3-phosphoglycerate. The protein is 2,3-bisphosphoglycerate-dependent phosphoglycerate mutase of Streptococcus gordonii (strain Challis / ATCC 35105 / BCRC 15272 / CH1 / DL1 / V288).